Here is a 521-residue protein sequence, read N- to C-terminus: Protein NRT1/ PTR FAMILY 4.2 (521 aa).

The next 12 membrane-spanning stretches (helical) occupy residues isoleucine 30–valine 50, alanine 65–isoleucine 85, phenylalanine 89–leucine 109, alanine 133–leucine 153, phenylalanine 172–leucine 192, phenylalanine 204–phenylalanine 224, phenylalanine 297–leucine 317, isoleucine 338–tyrosine 358, isoleucine 381–lysine 401, isoleucine 413–leucine 433, isoleucine 451–valine 471, and leucine 498–alanine 518.

This sequence belongs to the major facilitator superfamily. Proton-dependent oligopeptide transporter (POT/PTR) (TC 2.A.17) family. In terms of tissue distribution, expressed in siliques.

The protein localises to the membrane. Functionally, involved in abscisic acid transport. The protein is Protein NRT1/ PTR FAMILY 4.2 (NPF4.2) of Arabidopsis thaliana (Mouse-ear cress).